We begin with the raw amino-acid sequence, 238 residues long: Acyl-protein thioesterase 1 (238 aa).

Catalysis depends on charge relay system residues Ser120, Asp174, and His219.

This sequence belongs to the AB hydrolase superfamily. AB hydrolase 2 family.

The protein localises to the cytoplasm. The protein resides in the nucleus. The enzyme catalyses S-hexadecanoyl-L-cysteinyl-[protein] + H2O = L-cysteinyl-[protein] + hexadecanoate + H(+). Hydrolyzes fatty acids from S-acylated cysteine residues in proteins with a strong preference for palmitoylated G-alpha proteins over other acyl substrates. Mediates the deacylation of G-alpha proteins such as GPA1 in vivo, but has weak or no activity toward palmitoylated Ras proteins. Has weak lysophospholipase activity in vitro; however such activity may not exist in vivo. In Cryptococcus neoformans var. neoformans serotype D (strain B-3501A) (Filobasidiella neoformans), this protein is Acyl-protein thioesterase 1.